Here is a 62-residue protein sequence, read N- to C-terminus: Putative antitoxin AF_1095 (62 aa).

The protein belongs to the UPF0165 family.

Possibly the antitoxin component of a type II toxin-antitoxin (TA) system. The chain is Putative antitoxin AF_1095 from Archaeoglobus fulgidus (strain ATCC 49558 / DSM 4304 / JCM 9628 / NBRC 100126 / VC-16).